The chain runs to 388 residues: Mannitol-1-phosphate 5-dehydrogenase (388 aa).

NAD(+) is bound at residue 3-14; sequence ALHFGAGNIGRG.

It belongs to the mannitol dehydrogenase family.

The catalysed reaction is D-mannitol 1-phosphate + NAD(+) = beta-D-fructose 6-phosphate + NADH + H(+). The polypeptide is Mannitol-1-phosphate 5-dehydrogenase (Buchnera aphidicola subsp. Schizaphis graminum (strain Sg)).